The primary structure comprises 95 residues: Aspartyl/glutamyl-tRNA(Asn/Gln) amidotransferase subunit C (95 aa).

This sequence belongs to the GatC family. As to quaternary structure, heterotrimer of A, B and C subunits.

It catalyses the reaction L-glutamyl-tRNA(Gln) + L-glutamine + ATP + H2O = L-glutaminyl-tRNA(Gln) + L-glutamate + ADP + phosphate + H(+). It carries out the reaction L-aspartyl-tRNA(Asn) + L-glutamine + ATP + H2O = L-asparaginyl-tRNA(Asn) + L-glutamate + ADP + phosphate + 2 H(+). Allows the formation of correctly charged Asn-tRNA(Asn) or Gln-tRNA(Gln) through the transamidation of misacylated Asp-tRNA(Asn) or Glu-tRNA(Gln) in organisms which lack either or both of asparaginyl-tRNA or glutaminyl-tRNA synthetases. The reaction takes place in the presence of glutamine and ATP through an activated phospho-Asp-tRNA(Asn) or phospho-Glu-tRNA(Gln). The chain is Aspartyl/glutamyl-tRNA(Asn/Gln) amidotransferase subunit C from Magnetococcus marinus (strain ATCC BAA-1437 / JCM 17883 / MC-1).